The chain runs to 215 residues: LysM and putative peptidoglycan-binding domain-containing protein 2 (215 aa).

The segment at 1–40 (MADSSPALSLREGGPRAPRPSAPSPPPRSRSGSESEEAEL) is disordered. N-acetylalanine is present on alanine 2. Residues serine 5, serine 24, serine 33, and serine 57 each carry the phosphoserine modification. Pro residues predominate over residues 17–28 (APRPSAPSPPPR). The LysM domain maps to 71–115 (VEHRVRAGDTLQGIALKYGVTMEQIKRANKLFTNDCIFLKKTLNI). Disordered regions lie at residues 132 to 175 (DSPE…EEVS) and 193 to 215 (AAKK…LYHS). The segment covering 196-205 (KLKEESRDEE) has biased composition (basic and acidic residues).

This chain is LysM and putative peptidoglycan-binding domain-containing protein 2 (LYSMD2), found in Homo sapiens (Human).